A 938-amino-acid chain; its full sequence is Isoleucine--tRNA ligase (938 aa).

A 'HIGH' region motif is present at residues 58–68 (PYANGSIHIGH). Position 183 is an N6-acetyllysine (Lys183). Position 561 (Glu561) interacts with L-isoleucyl-5'-AMP. A 'KMSKS' region motif is present at residues 602–606 (KMSKS). ATP is bound at residue Lys605. Residues Cys901, Cys904, Cys921, and Cys924 each contribute to the Zn(2+) site.

Belongs to the class-I aminoacyl-tRNA synthetase family. IleS type 1 subfamily. As to quaternary structure, monomer. Zn(2+) is required as a cofactor.

The protein localises to the cytoplasm. The enzyme catalyses tRNA(Ile) + L-isoleucine + ATP = L-isoleucyl-tRNA(Ile) + AMP + diphosphate. Catalyzes the attachment of isoleucine to tRNA(Ile). As IleRS can inadvertently accommodate and process structurally similar amino acids such as valine, to avoid such errors it has two additional distinct tRNA(Ile)-dependent editing activities. One activity is designated as 'pretransfer' editing and involves the hydrolysis of activated Val-AMP. The other activity is designated 'posttransfer' editing and involves deacylation of mischarged Val-tRNA(Ile). The chain is Isoleucine--tRNA ligase from Escherichia coli O127:H6 (strain E2348/69 / EPEC).